We begin with the raw amino-acid sequence, 280 residues long: uncharacterized protein (280 aa).

The Proton donor role is filled by Tyr-54. His-116 contributes to the substrate binding site. NADP(+) is bound at residue 194–246 (SPLMQGQLLDHPVLADIAQTYNKSVAQIILRWDLQHGIITIPKSTKEHRIKEN).

This sequence belongs to the aldo/keto reductase family.

This is an uncharacterized protein from Bacillus subtilis (strain 168).